The chain runs to 352 residues: MSTAVTILTDTWTRREKRFDGHAKILAIGTAIPANWVDQTTYPDFYFRITNSEHLLEYKEKFRRICNKSKIRKRHLVITEELLKKNPNLCTYNDASLNTRQDILVSEVPKLGKEAAMKAIKEWGRPISEITHLVFCTSSGVDMPGADFQLAKLLGLSSSVNRLMMYQQGCNAGAVMLRLAKDLAENNKGGRVLVVCSEVMLSVFRGPSLQQEDNLLAQCLFGDGSAAVIVGTEPRPGLETPLFELVSAAQTTIPDTDSYLKLQLREMGLTFHCSKAVPSLITQNIEDCLVKAFEPFGISDWNSIFWILHPGGNAILDGVEEKLGLEPEKLRASRDVLSQYGNLTSACVLFKP.

The active site involves Cys170.

The protein belongs to the thiolase-like superfamily. Chalcone/stilbene synthases family.

The enzyme catalyses (E)-4-coumaroyl-CoA + 3 malonyl-CoA + 3 H(+) = 2',4,4',6'-tetrahydroxychalcone + 3 CO2 + 4 CoA. The protein operates within secondary metabolite biosynthesis; flavonoid biosynthesis. The primary product of this enzyme is 4,2',4',6'-tetrahydroxychalcone (also termed naringenin-chalcone or chalcone) which can under specific conditions spontaneously isomerize into naringenin. The polypeptide is Chalcone synthase C (CHSC) (Ipomoea purpurea (Common morning glory)).